The following is a 212-amino-acid chain: Thymidylate kinase (212 aa).

Gly-10 to Thr-17 contacts ATP.

Belongs to the thymidylate kinase family.

It catalyses the reaction dTMP + ATP = dTDP + ADP. Phosphorylation of dTMP to form dTDP in both de novo and salvage pathways of dTTP synthesis. This is Thymidylate kinase from Serratia proteamaculans (strain 568).